Here is a 277-residue protein sequence, read N- to C-terminus: NAD kinase (277 aa).

Aspartate 55 acts as the Proton acceptor in catalysis. NAD(+)-binding positions include 55 to 56 (DG), 131 to 132 (NE), arginine 157, aspartate 159, and 170 to 175 (TAYNKS).

This sequence belongs to the NAD kinase family. A divalent metal cation is required as a cofactor.

It is found in the cytoplasm. The catalysed reaction is NAD(+) + ATP = ADP + NADP(+) + H(+). Its function is as follows. Involved in the regulation of the intracellular balance of NAD and NADP, and is a key enzyme in the biosynthesis of NADP. Catalyzes specifically the phosphorylation on 2'-hydroxyl of the adenosine moiety of NAD to yield NADP. This chain is NAD kinase, found in Streptococcus mutans serotype c (strain ATCC 700610 / UA159).